The primary structure comprises 197 residues: Phosphoheptose isomerase (197 aa).

One can recognise an SIS domain in the interval methionine 34–glutamine 196. Residue asparagine 49–glycine 51 participates in substrate binding. Zn(2+) contacts are provided by histidine 58 and glutamate 62. Residues glutamate 62, asparagine 91 to aspartate 92, serine 117 to serine 119, serine 122, and glutamine 172 contribute to the substrate site. Positions 172 and 180 each coordinate Zn(2+).

Belongs to the SIS family. GmhA subfamily. In terms of assembly, homotetramer. It depends on Zn(2+) as a cofactor.

The protein resides in the cytoplasm. It carries out the reaction 2 D-sedoheptulose 7-phosphate = D-glycero-alpha-D-manno-heptose 7-phosphate + D-glycero-beta-D-manno-heptose 7-phosphate. It participates in carbohydrate biosynthesis; D-glycero-D-manno-heptose 7-phosphate biosynthesis; D-glycero-alpha-D-manno-heptose 7-phosphate and D-glycero-beta-D-manno-heptose 7-phosphate from sedoheptulose 7-phosphate: step 1/1. Functionally, catalyzes the isomerization of sedoheptulose 7-phosphate in D-glycero-D-manno-heptose 7-phosphate. This chain is Phosphoheptose isomerase, found in Shewanella frigidimarina (strain NCIMB 400).